The primary structure comprises 235 residues: 7-cyano-7-deazaguanine synthase (235 aa).

An ATP-binding site is contributed by 7-17 (CSGGLDSVSLA). The Zn(2+) site is built by Cys-185, Cys-193, Cys-196, and Cys-199.

Belongs to the QueC family. It depends on Zn(2+) as a cofactor.

It carries out the reaction 7-carboxy-7-deazaguanine + NH4(+) + ATP = 7-cyano-7-deazaguanine + ADP + phosphate + H2O + H(+). Its pathway is purine metabolism; 7-cyano-7-deazaguanine biosynthesis. Functionally, catalyzes the ATP-dependent conversion of 7-carboxy-7-deazaguanine (CDG) to 7-cyano-7-deazaguanine (preQ(0)). This is 7-cyano-7-deazaguanine synthase from Allorhizobium ampelinum (strain ATCC BAA-846 / DSM 112012 / S4) (Agrobacterium vitis (strain S4)).